The sequence spans 937 residues: Isoleucine--tRNA ligase (937 aa).

Residues P58–H68 carry the 'HIGH' region motif. An L-isoleucyl-5'-AMP-binding site is contributed by E561. Residues K602 to S606 carry the 'KMSKS' region motif. K605 lines the ATP pocket. Positions 900, 903, 920, and 923 each coordinate Zn(2+).

The protein belongs to the class-I aminoacyl-tRNA synthetase family. IleS type 1 subfamily. In terms of assembly, monomer. Requires Zn(2+) as cofactor.

The protein resides in the cytoplasm. The catalysed reaction is tRNA(Ile) + L-isoleucine + ATP = L-isoleucyl-tRNA(Ile) + AMP + diphosphate. Its function is as follows. Catalyzes the attachment of isoleucine to tRNA(Ile). As IleRS can inadvertently accommodate and process structurally similar amino acids such as valine, to avoid such errors it has two additional distinct tRNA(Ile)-dependent editing activities. One activity is designated as 'pretransfer' editing and involves the hydrolysis of activated Val-AMP. The other activity is designated 'posttransfer' editing and involves deacylation of mischarged Val-tRNA(Ile). The chain is Isoleucine--tRNA ligase from Histophilus somni (strain 2336) (Haemophilus somnus).